The primary structure comprises 239 residues: Uracil-DNA glycosylase (239 aa).

The Proton acceptor role is filled by Asp65.

Belongs to the uracil-DNA glycosylase (UDG) superfamily. UNG family.

It is found in the cytoplasm. The enzyme catalyses Hydrolyzes single-stranded DNA or mismatched double-stranded DNA and polynucleotides, releasing free uracil.. Excises uracil residues from the DNA which can arise as a result of misincorporation of dUMP residues by DNA polymerase or due to deamination of cytosine. This Levilactobacillus brevis (strain ATCC 367 / BCRC 12310 / CIP 105137 / JCM 1170 / LMG 11437 / NCIMB 947 / NCTC 947) (Lactobacillus brevis) protein is Uracil-DNA glycosylase.